The following is a 500-amino-acid chain: Protein adenylyltransferase Fic (500 aa).

The chain crosses the membrane as a helical span at residues 39–59 (LSFLIFFVIGSLFSGLMFALL). TPR repeat units lie at residues 122 to 155 (ALSSLKVAVEMKLMGKDDKALRLFQHAMALSPRH) and 156 to 190 (PEILTKYGEFLEHSQQDIVTADHYYYQALTVNPSH). The Inhibitory (S/T)XXXE(G/N) motif motif lies at 247 to 252 (SVGIEG). ATP-binding positions include Glu-251 and 333–336 (VGGH). Residues 302–437 (ITLKDLLEIH…IRPFVRFIAD (136 aa)) enclose the Fido domain. Residue His-380 is part of the active site. Residues 384 to 391 (DGNGRTSR), 416 to 417 (YY), and Asn-424 each bind ATP. Residues 477–500 (GREGGSTVHEGSGTGDSIRIGTMW) form a disordered region.

This sequence belongs to the fic family. In terms of assembly, homodimer.

The protein resides in the membrane. It carries out the reaction L-tyrosyl-[protein] + ATP = O-(5'-adenylyl)-L-tyrosyl-[protein] + diphosphate. The enzyme catalyses L-threonyl-[protein] + ATP = 3-O-(5'-adenylyl)-L-threonyl-[protein] + diphosphate. It catalyses the reaction 3-O-(5'-adenylyl)-L-threonyl-[protein] + H2O = L-threonyl-[protein] + AMP + H(+). With respect to regulation, the side chain of Glu-251 determines which of the two opposing activities (AMPylase or de-AMPylase) will take place. In response to endoplasmic reticulum stress, mediates de-AMPylase activity. Adenylyltransferase activity is inhibited by the inhibitory helix present at the N-terminus: Glu-251 binds ATP and competes with ATP-binding at Arg-391, thereby preventing adenylyltransferase activity. In unstressed cells, disengagement of Glu-251 promotes adenylyltransferase activity. Activation dissociates ATP-binding from Glu-251, allowing ordered binding of the entire ATP moiety with the alpha-phosphate in an orientation that is productive for accepting an incoming target hydroxyl side chain. Its function is as follows. Protein that can both mediate the addition of adenosine 5'-monophosphate (AMP) to specific residues of target proteins (AMPylation), and the removal of the same modification from target proteins (de-AMPylation), depending on the context. The side chain of Glu-251 determines which of the two opposing activities (AMPylase or de-AMPylase) will take place. Acts as a key regulator of the unfolded protein response (UPR) by mediating AMPylation or de-AMPylation of Hsc70-3/BiP. In unstressed cells, acts as an adenylyltransferase by mediating AMPylation of Hsc70-3/BiP at 'Thr-518', thereby inactivating it. In response to endoplasmic reticulum stress, acts as a phosphodiesterase by mediating removal of ATP (de-AMPylation) from Hsc70-3/BiP at 'Thr-518', leading to restore HSPA5/BiP activity. The protein is Protein adenylyltransferase Fic of Culex quinquefasciatus (Southern house mosquito).